The chain runs to 132 residues: Fatty acid-binding protein, brain (132 aa).

An N-acetylvaline modification is found at Val2. Residue 127–129 (RCY) coordinates a fatty acid.

Belongs to the calycin superfamily. Fatty-acid binding protein (FABP) family. In terms of tissue distribution, expressed in brain and other neural tissues.

Its subcellular location is the cytoplasm. In terms of biological role, B-FABP could be involved in the transport of a so far unknown hydrophobic ligand with potential morphogenic activity during CNS development. It is required for the establishment of the radial glial fiber system in developing brain, a system that is necessary for the migration of immature neurons to establish cortical layers. This Mus musculus (Mouse) protein is Fatty acid-binding protein, brain (Fabp7).